The primary structure comprises 213 residues: MEVSVLIPAAGNGLRLGRGPKAFLQVGGRTLLEWTLAAFRDAAEVLVALPPGAEPPKGLGAVFLEGGATRQASVARLLEAASLPLVLVHDVARPFVSRGLVARVLEAAQRSGAAVPVLPVPDTLMAPEGEAYGRVVPREAFRLVQTPQGFFTALLREAHAYARRKGLEASDDAQLVQALGYPVALVEGEATAFKITHPQDLVLAEALARVWSA.

Belongs to the IspD/TarI cytidylyltransferase family. IspD subfamily.

It carries out the reaction 2-C-methyl-D-erythritol 4-phosphate + CTP + H(+) = 4-CDP-2-C-methyl-D-erythritol + diphosphate. The protein operates within isoprenoid biosynthesis; isopentenyl diphosphate biosynthesis via DXP pathway; isopentenyl diphosphate from 1-deoxy-D-xylulose 5-phosphate: step 2/6. In terms of biological role, catalyzes the formation of 4-diphosphocytidyl-2-C-methyl-D-erythritol from CTP and 2-C-methyl-D-erythritol 4-phosphate (MEP). The protein is 2-C-methyl-D-erythritol 4-phosphate cytidylyltransferase of Thermus thermophilus (strain ATCC BAA-163 / DSM 7039 / HB27).